The following is a 473-amino-acid chain: Ribosomal RNA small subunit methyltransferase F (473 aa).

Residues 123–129, glutamate 147, aspartate 174, and aspartate 192 each bind S-adenosyl-L-methionine; that span reads AAAPGSK. Cysteine 245 functions as the Nucleophile in the catalytic mechanism.

It belongs to the class I-like SAM-binding methyltransferase superfamily. RsmB/NOP family.

The protein localises to the cytoplasm. The catalysed reaction is cytidine(1407) in 16S rRNA + S-adenosyl-L-methionine = 5-methylcytidine(1407) in 16S rRNA + S-adenosyl-L-homocysteine + H(+). Its function is as follows. Specifically methylates the cytosine at position 1407 (m5C1407) of 16S rRNA. In Vibrio atlanticus (strain LGP32) (Vibrio splendidus (strain Mel32)), this protein is Ribosomal RNA small subunit methyltransferase F.